The following is a 336-amino-acid chain: Electron transfer flavoprotein subunit alpha (336 aa).

Leucine 275–aspartate 303 lines the FAD pocket.

This sequence belongs to the ETF alpha-subunit/FixB family. As to quaternary structure, heterodimer of an alpha and a beta subunit. The cofactor is FAD.

The electron transfer flavoprotein serves as a specific electron acceptor for other dehydrogenases. It transfers the electrons to the main respiratory chain via ETF-ubiquinone oxidoreductase (ETF dehydrogenase). The protein is Electron transfer flavoprotein subunit alpha (etfA) of Clostridium acetobutylicum (strain ATCC 824 / DSM 792 / JCM 1419 / IAM 19013 / LMG 5710 / NBRC 13948 / NRRL B-527 / VKM B-1787 / 2291 / W).